The chain runs to 105 residues: MFAVIKAGGKQYKVDRNSVIKVEKIDGELGSKIQFDQILMIGEYSKPSFIGTPIVKGAVVTAEITNQLKDNKIIVFKKKRRKNYRRKAGHRQELTELKILDITKQ.

The protein belongs to the bacterial ribosomal protein bL21 family. Part of the 50S ribosomal subunit. Contacts protein L20.

In terms of biological role, this protein binds to 23S rRNA in the presence of protein L20. This Rickettsia canadensis (strain McKiel) protein is Large ribosomal subunit protein bL21.